A 459-amino-acid polypeptide reads, in one-letter code: MSNRFAVILAAGKGTRMKSKLYKVLHPVCGKPMVQHVVDQVSQLGLQKLVTVVGHGAEMVQEQLGNVSEFALQAEQLGTAHAVDQAAGVLANEEGTTLVICGDTPLITAETMEALLQQHKEAGAMATVLTAYIEEPAGYGRIVRNENGHVEKIVEHKDANEKELAIKEINTGTYCFDNKALFASLSKVSNDNVQGEYYLPDVIEILKNEGHIVSAYQTEHFDETLGVNDRVALSQAEIIMKNRINRKNMVNGVTIIDPSNTYISADAIIGSDTVLHPGTIIEGNTVIGSDCEIGPHTVIRDSEIGDRTTIRQSTVHDSKLGTEVSVGPFAHIRPDSVIGDEVRVGNFVEIKKTVFGNRSKASHLSYIGDAQIGEDVNLGCGSITVNYDGKNKFKTVIGNGVFIGCNSNLVAPVTVEDGAYVAAGSTITENVPSKALSVARARQVNKEDYVDQLLNKKKS.

Positions Met-1–Arg-230 are pyrophosphorylase. UDP-N-acetyl-alpha-D-glucosamine-binding positions include Leu-9–Gly-12, Lys-23, Gln-73, and Gly-78–Thr-79. Asp-103 lines the Mg(2+) pocket. UDP-N-acetyl-alpha-D-glucosamine contacts are provided by Gly-140, Glu-155, Asn-170, and Asn-228. Residue Asn-228 coordinates Mg(2+). A linker region spans residues Val-231–Asn-251. An N-acetyltransferase region spans residues Gly-252 to Ser-459. UDP-N-acetyl-alpha-D-glucosamine contacts are provided by Arg-333 and Lys-351. His-363 acts as the Proton acceptor in catalysis. UDP-N-acetyl-alpha-D-glucosamine-binding residues include Tyr-366 and Asn-377. Residues Asn-386 to Tyr-387, Ala-423, and Arg-440 each bind acetyl-CoA.

This sequence in the N-terminal section; belongs to the N-acetylglucosamine-1-phosphate uridyltransferase family. The protein in the C-terminal section; belongs to the transferase hexapeptide repeat family. As to quaternary structure, homotrimer. Mg(2+) serves as cofactor.

The protein resides in the cytoplasm. The catalysed reaction is alpha-D-glucosamine 1-phosphate + acetyl-CoA = N-acetyl-alpha-D-glucosamine 1-phosphate + CoA + H(+). The enzyme catalyses N-acetyl-alpha-D-glucosamine 1-phosphate + UTP + H(+) = UDP-N-acetyl-alpha-D-glucosamine + diphosphate. The protein operates within nucleotide-sugar biosynthesis; UDP-N-acetyl-alpha-D-glucosamine biosynthesis; N-acetyl-alpha-D-glucosamine 1-phosphate from alpha-D-glucosamine 6-phosphate (route II): step 2/2. It functions in the pathway nucleotide-sugar biosynthesis; UDP-N-acetyl-alpha-D-glucosamine biosynthesis; UDP-N-acetyl-alpha-D-glucosamine from N-acetyl-alpha-D-glucosamine 1-phosphate: step 1/1. Its pathway is bacterial outer membrane biogenesis; LPS lipid A biosynthesis. Its function is as follows. Catalyzes the last two sequential reactions in the de novo biosynthetic pathway for UDP-N-acetylglucosamine (UDP-GlcNAc). The C-terminal domain catalyzes the transfer of acetyl group from acetyl coenzyme A to glucosamine-1-phosphate (GlcN-1-P) to produce N-acetylglucosamine-1-phosphate (GlcNAc-1-P), which is converted into UDP-GlcNAc by the transfer of uridine 5-monophosphate (from uridine 5-triphosphate), a reaction catalyzed by the N-terminal domain. The sequence is that of Bifunctional protein GlmU from Bacillus cereus (strain ZK / E33L).